The sequence spans 726 residues: Penicillin-binding protein 1A (726 aa).

Residues 1 to 3 lie on the Cytoplasmic side of the membrane; that stretch reads MKK. Residues 4–24 form a helical; Signal-anchor for type II membrane protein membrane-spanning segment; it reads LVIGILGIVIALFVGLLVFLI. Topologically, residues 25–726 are periplasmic; the sequence is PIYKNLPDPK…SDLNAILGLR (702 aa). The interval 45–213 is transglycosylase; sequence SEVYDAKGRL…AKYNPFYHPE (169 aa). The Proton donor; for transglycosylase activity role is filled by Glu-83. The segment at 379–662 is transpeptidase; sequence KYLGGNRAEI…SRVALPIWID (284 aa). The active-site Acyl-ester intermediate; for transpeptidase activity is the Ser-432.

This sequence in the N-terminal section; belongs to the glycosyltransferase 51 family. It in the C-terminal section; belongs to the transpeptidase family.

The protein resides in the cell inner membrane. The enzyme catalyses [GlcNAc-(1-&gt;4)-Mur2Ac(oyl-L-Ala-gamma-D-Glu-L-Lys-D-Ala-D-Ala)](n)-di-trans,octa-cis-undecaprenyl diphosphate + beta-D-GlcNAc-(1-&gt;4)-Mur2Ac(oyl-L-Ala-gamma-D-Glu-L-Lys-D-Ala-D-Ala)-di-trans,octa-cis-undecaprenyl diphosphate = [GlcNAc-(1-&gt;4)-Mur2Ac(oyl-L-Ala-gamma-D-Glu-L-Lys-D-Ala-D-Ala)](n+1)-di-trans,octa-cis-undecaprenyl diphosphate + di-trans,octa-cis-undecaprenyl diphosphate + H(+). It carries out the reaction Preferential cleavage: (Ac)2-L-Lys-D-Ala-|-D-Ala. Also transpeptidation of peptidyl-alanyl moieties that are N-acyl substituents of D-alanine.. It functions in the pathway cell wall biogenesis; peptidoglycan biosynthesis. This Aquifex aeolicus (strain VF5) protein is Penicillin-binding protein 1A (mrcA).